We begin with the raw amino-acid sequence, 1576 residues long: DNA-directed RNA polymerase subunit beta' (1576 aa).

Positions 64, 66, 79, and 82 each coordinate Zn(2+). Residues Asp590, Asp592, and Asp594 each coordinate Mg(2+). Cys928, Cys1002, Cys1009, and Cys1012 together coordinate Zn(2+).

This sequence belongs to the RNA polymerase beta' chain family. As to quaternary structure, the RNAP catalytic core consists of 2 alpha, 1 beta, 1 beta' and 1 omega subunit. When a sigma factor is associated with the core the holoenzyme is formed, which can initiate transcription. Requires Mg(2+) as cofactor. Zn(2+) is required as a cofactor.

The enzyme catalyses RNA(n) + a ribonucleoside 5'-triphosphate = RNA(n+1) + diphosphate. Functionally, DNA-dependent RNA polymerase catalyzes the transcription of DNA into RNA using the four ribonucleoside triphosphates as substrates. The chain is DNA-directed RNA polymerase subunit beta' from Aquifex pyrophilus.